The following is a 161-amino-acid chain: Small ribosomal subunit protein uS9 (161 aa).

The span at 1-21 shows a compositional bias: polar residues; sequence MATLQSLADLNRANTQTSNPE. Residues 1 to 25 are disordered; the sequence is MATLQSLADLNRANTQTSNPENEAP.

Belongs to the universal ribosomal protein uS9 family.

In Methylorubrum populi (strain ATCC BAA-705 / NCIMB 13946 / BJ001) (Methylobacterium populi), this protein is Small ribosomal subunit protein uS9.